Reading from the N-terminus, the 711-residue chain is Polyribonucleotide nucleotidyltransferase (711 aa).

2 residues coordinate Mg(2+): Asp-486 and Asp-492. Positions 553–612 (PRIHTIKINPDKIKDVIGKGGSVIRALTEETGTTIEIEDDGTVKIAATDGEKAKHAIRRI) constitute a KH domain. The S1 motif domain occupies 622–690 (GRVYTGKVTR…RQGRIRLSIK (69 aa)). Residues 689-711 (IKEATEQSQPAAAPEAPAAEQGE) form a disordered region. Residues 694–711 (EQSQPAAAPEAPAAEQGE) show a composition bias toward low complexity.

It belongs to the polyribonucleotide nucleotidyltransferase family. In terms of assembly, component of the RNA degradosome, which is a multiprotein complex involved in RNA processing and mRNA degradation. Mg(2+) serves as cofactor.

It localises to the cytoplasm. The catalysed reaction is RNA(n+1) + phosphate = RNA(n) + a ribonucleoside 5'-diphosphate. Its function is as follows. Involved in mRNA degradation. Catalyzes the phosphorolysis of single-stranded polyribonucleotides processively in the 3'- to 5'-direction. In Escherichia coli (strain SE11), this protein is Polyribonucleotide nucleotidyltransferase.